Here is a 410-residue protein sequence, read N- to C-terminus: Secreted protein PRY1 (410 aa).

Residues 1-20 (MKQNYILSIILCYLLANVHS) form the signal peptide. Disordered stretches follow at residues 64–86 (PAPV…STPS), 102–132 (SDSD…SSSS), and 148–260 (SSSS…SSSS). The span at 148–179 (SSSSTPSSISQQQQQQQGSPASGSNSPNSAQP) shows a compositional bias: low complexity. The segment covering 197–211 (SGLGSGFGSGFGSGS) has biased composition (gly residues). Residues 212-260 (GSDSDSGSGLPSASSSTIIQQQPSSSNIGSSSTSSSSSSSSSSSSSSSS) show a composition bias toward low complexity. An SCP domain is found at 283–394 (LDAHNKYRAQ…NWGLYVVCEY (112 aa)).

It belongs to the CRISP family.

Its subcellular location is the secreted. Functionally, secreted protein that acts as a virulence factor during infections. The protein is Secreted protein PRY1 (PRY1) of Candida albicans (strain SC5314 / ATCC MYA-2876) (Yeast).